A 1406-amino-acid chain; its full sequence is Sterol 3-beta-glucosyltransferase (1406 aa).

A disordered region spans residues 83-231 (ARFDESSDSD…IHSSHESSTS (149 aa)). Residues 110-128 (GSSNPVNSQTEQRSGSQTS) show a composition bias toward polar residues. Residues 209–231 (SAGRSQNSSQESSIHSSHESSTS) show a composition bias toward low complexity. The GRAM 1 domain maps to 236-286 (RLMEMFDFNKPEKVLVEYACSLLQSMLLQGYMYVTEGHICFYAYLPRKSTV). A PH domain is found at 286–385 (VAIKSGYLHK…WVKALQKVIF (100 aa)). Disordered stretches follow at residues 457–558 (ASGH…AESA) and 576–622 (LDKR…DGKP). Basic and acidic residues predominate over residues 468-478 (HADRSPRSDRT). 2 stretches are compositionally biased toward polar residues: residues 490 to 499 (GTSQPGNGSA) and 531 to 548 (SESI…SAVW). The span at 576 to 587 (LDKRACSDERSG) shows a compositional bias: basic and acidic residues. The region spanning 730–796 (DRFRAHFALP…KDVENVEKEK (67 aa)) is the GRAM 2 domain. 10 residues coordinate UDP-alpha-D-glucose: S917, R918, D920, A1220, H1222, H1235, G1239, T1240, D1259, and Q1260. Residues 1334-1406 (QRSIASSTPF…LTNSIHGAGR (73 aa)) are disordered. A compositionally biased stretch (low complexity) spans 1336–1349 (SIASSTPFSPTPSA). The span at 1355–1375 (QGDDDVEDSEEWTFVGDDNEM) shows a compositional bias: acidic residues. The segment covering 1376-1387 (DMSRRMRDRAIS) has biased composition (basic and acidic residues). Residues 1397–1406 (LTNSIHGAGR) are compositionally biased toward polar residues.

Belongs to the glycosyltransferase 28 family.

It is found in the cytoplasm. Its subcellular location is the preautophagosomal structure membrane. The catalysed reaction is a sterol + UDP-alpha-D-glucose = a sterol 3-beta-D-glucoside + UDP + H(+). It catalyses the reaction ergosterol + UDP-alpha-D-glucose = ergosteryl 3-beta-D-glucoside + UDP + H(+). In terms of biological role, sterol glycosyltransferase responsible for the glycosylation of ergosterol to form ergosterol-glucoside. The chain is Sterol 3-beta-glucosyltransferase from Aspergillus clavatus (strain ATCC 1007 / CBS 513.65 / DSM 816 / NCTC 3887 / NRRL 1 / QM 1276 / 107).